The primary structure comprises 332 residues: GLIPR1-like protein 2 (332 aa).

The SCP domain occupies 57 to 191 (LHNELRGTVF…THAALFICNY (135 aa)). N-linked (GlcNAc...) asparagine glycosylation occurs at Asn-145. The chain crosses the membrane as a helical span at residues 253–273 (IFILFLRVASLLLCVIVVLIV). A disordered region spans residues 293–332 (EGKTEVEIVMEEGEGEGEGGEGEGEGEEKEEEEMLEEDEQ). The span at 300–332 (IVMEEGEGEGEGGEGEGEGEEKEEEEMLEEDEQ) shows a compositional bias: acidic residues.

It belongs to the CRISP family.

It localises to the membrane. The chain is GLIPR1-like protein 2 (Glipr1l2) from Mus musculus (Mouse).